The chain runs to 233 residues: Small ribosomal subunit protein uS3 (233 aa).

The KH type-2 domain occupies 39-107; the sequence is VRQFLASELT…PSQINIAEVR (69 aa).

This sequence belongs to the universal ribosomal protein uS3 family. As to quaternary structure, part of the 30S ribosomal subunit. Forms a tight complex with proteins S10 and S14.

In terms of biological role, binds the lower part of the 30S subunit head. Binds mRNA in the 70S ribosome, positioning it for translation. This chain is Small ribosomal subunit protein uS3, found in Baumannia cicadellinicola subsp. Homalodisca coagulata.